The sequence spans 427 residues: Serine--tRNA ligase (427 aa).

231 to 233 is an L-serine binding site; sequence TAE. Residue 262–264 participates in ATP binding; the sequence is RSE. Glu285 contacts L-serine. ATP is bound at residue 349–352; sequence EISS. An L-serine-binding site is contributed by Ser385.

It belongs to the class-II aminoacyl-tRNA synthetase family. Type-1 seryl-tRNA synthetase subfamily. In terms of assembly, homodimer. The tRNA molecule binds across the dimer.

Its subcellular location is the cytoplasm. The catalysed reaction is tRNA(Ser) + L-serine + ATP = L-seryl-tRNA(Ser) + AMP + diphosphate + H(+). It carries out the reaction tRNA(Sec) + L-serine + ATP = L-seryl-tRNA(Sec) + AMP + diphosphate + H(+). It functions in the pathway aminoacyl-tRNA biosynthesis; selenocysteinyl-tRNA(Sec) biosynthesis; L-seryl-tRNA(Sec) from L-serine and tRNA(Sec): step 1/1. In terms of biological role, catalyzes the attachment of serine to tRNA(Ser). Is also able to aminoacylate tRNA(Sec) with serine, to form the misacylated tRNA L-seryl-tRNA(Sec), which will be further converted into selenocysteinyl-tRNA(Sec). The polypeptide is Serine--tRNA ligase (Allorhizobium ampelinum (strain ATCC BAA-846 / DSM 112012 / S4) (Agrobacterium vitis (strain S4))).